Reading from the N-terminus, the 62-residue chain is Large ribosomal subunit protein bL28 (62 aa).

It belongs to the bacterial ribosomal protein bL28 family.

The chain is Large ribosomal subunit protein bL28 from Thermoanaerobacter sp. (strain X514).